A 745-amino-acid chain; its full sequence is Ribosomal protein S6 kinase alpha-6 (745 aa).

Residues 1–28 are disordered; it reads MLPFAPQDEPWDREMEVFSGGGASSGEV. One can recognise a Protein kinase 1 domain in the interval 73–330; the sequence is FELLKVLGQG…VEEIKRHLFF (258 aa). ATP-binding positions include 79–87 and lysine 105; that span reads LGQGSFGKV. Aspartate 198 functions as the Proton acceptor in the catalytic mechanism. Serine 232, serine 372, and serine 389 each carry phosphoserine. Positions 331-400 constitute an AGC-kinase C-terminal domain; that stretch reads ANIDWDKLYK…VATSIAEEYK (70 aa). One can recognise a Protein kinase 2 domain in the interval 426 to 683; sequence YELKEDIGVG…AEQILKHSWI (258 aa). ATP-binding positions include 432 to 440 and lysine 455; that span reads IGVGSYSVC. The active-site Proton acceptor is aspartate 543. Phosphothreonine is present on threonine 581.

Belongs to the protein kinase superfamily. AGC Ser/Thr protein kinase family. S6 kinase subfamily. In terms of assembly, forms a complex with MAPK3/ERK1 but not with MAPK9 or MAPK14 in serum-starved cells. The cofactor is Mg(2+). Phosphorylated at Ser-232, Ser-372, and Ser-389 in serum-starved cells.

Its subcellular location is the cytoplasm. It localises to the cytosol. The protein resides in the nucleus. It carries out the reaction L-seryl-[protein] + ATP = O-phospho-L-seryl-[protein] + ADP + H(+). The enzyme catalyses L-threonyl-[protein] + ATP = O-phospho-L-threonyl-[protein] + ADP + H(+). Constitutively activated by phosphorylation at Ser-232, Ser-372, and Ser-389 in serum-starved cells. Does not require growth factor stimulation for significant kinase activity. Constitutively active serine/threonine-protein kinase that exhibits growth-factor-independent kinase activity and that may participate in p53/TP53-dependent cell growth arrest signaling and play an inhibitory role during embryogenesis. The protein is Ribosomal protein S6 kinase alpha-6 (RPS6KA6) of Homo sapiens (Human).